The chain runs to 68 residues: Venom-like beta-defensin (68 aa).

The signal sequence occupies residues 1–24 (MRLLILFLAVVTLLSLAGPGSAEV). Intrachain disulfides connect C33-C60, C40-C54, and C47-C61.

As to expression, highly expressed in intestine, liver and spleen and expressed at lower levels in brain, kidney, lung, testis and venom gland.

The protein localises to the secreted. In terms of biological role, potent antimicrobial peptide that displays activity against S.aureus and P.aeruginosa. Does not inhibit growth of E.coli. The sequence is that of Venom-like beta-defensin from Ornithorhynchus anatinus (Duckbill platypus).